The chain runs to 379 residues: uncharacterized protein (379 aa).

Disordered regions lie at residues 1–25, 128–158, and 355–379; these read MASD…EKGK, QGKT…IERT, and TEKT…QGDI. Positions 128-141 are enriched in polar residues; the sequence is QGKTTSATTSNSTI.

This is an uncharacterized protein from Caenorhabditis elegans.